The chain runs to 312 residues: Protoheme IX farnesyltransferase (312 aa).

The next 9 helical transmembrane spans lie at 31–51 (LLMKPSVMLLAVFTAITGLFI), 58–78 (PLLSSIAILCISTGAGAAGAI), 107–127 (TALTFGIILAFFSVLVMAICV), 130–150 (ISSILLLISISFYIIVYTMWL), 157–177 (NIVIGGAAGALPPVIGYSAVT), 184–204 (CLMLFLIIFLWTPAHFWTLSL), 229–249 (YSILAYTFLTVISASLPYFTD), 250–270 (IAGLLYLICSTISGIIFLCYA), and 286–306 (FKYSIIYLFNIFLYLIIEHCI).

Belongs to the UbiA prenyltransferase family. Protoheme IX farnesyltransferase subfamily.

The protein localises to the cell inner membrane. It carries out the reaction heme b + (2E,6E)-farnesyl diphosphate + H2O = Fe(II)-heme o + diphosphate. Its pathway is porphyrin-containing compound metabolism; heme O biosynthesis; heme O from protoheme: step 1/1. Its function is as follows. Converts heme B (protoheme IX) to heme O by substitution of the vinyl group on carbon 2 of heme B porphyrin ring with a hydroxyethyl farnesyl side group. The polypeptide is Protoheme IX farnesyltransferase (Orientia tsutsugamushi (strain Ikeda) (Rickettsia tsutsugamushi)).